A 436-amino-acid chain; its full sequence is GTPase Der (436 aa).

EngA-type G domains follow at residues 4–167 (PIVA…KEEE) and 176–351 (IRLS…ENHK). Residues 10-17 (GRPNVGKS), 57-61 (DTGGI), 119-122 (NKVD), 182-189 (GRPNVGKS), 229-233 (DTAGM), and 294-297 (NKWD) contribute to the GTP site. One can recognise a KH-like domain in the interval 352-436 (KRVQSSTLNE…PVHIIARKRN (85 aa)).

This sequence belongs to the TRAFAC class TrmE-Era-EngA-EngB-Septin-like GTPase superfamily. EngA (Der) GTPase family. As to quaternary structure, associates with the 50S ribosomal subunit.

Functionally, GTPase that plays an essential role in the late steps of ribosome biogenesis. The sequence is that of GTPase Der from Staphylococcus saprophyticus subsp. saprophyticus (strain ATCC 15305 / DSM 20229 / NCIMB 8711 / NCTC 7292 / S-41).